We begin with the raw amino-acid sequence, 78 residues long: MSRVCTMTGKKANNAYAVSHSHRRTKKLQEANLQWKRVWWSEGNRWVKLRISTKAIKTIEKKGLAVFAREVGLNLNLY.

The protein belongs to the bacterial ribosomal protein bL28 family.

The chain is Large ribosomal subunit protein bL28 from Microcystis aeruginosa (strain NIES-843 / IAM M-2473).